The following is a 302-amino-acid chain: Porphobilinogen deaminase (302 aa).

Residue cysteine 234 is modified to S-(dipyrrolylmethanemethyl)cysteine.

This sequence belongs to the HMBS family. Monomer. Requires dipyrromethane as cofactor.

It carries out the reaction 4 porphobilinogen + H2O = hydroxymethylbilane + 4 NH4(+). It functions in the pathway porphyrin-containing compound metabolism; protoporphyrin-IX biosynthesis; coproporphyrinogen-III from 5-aminolevulinate: step 2/4. Its function is as follows. Tetrapolymerization of the monopyrrole PBG into the hydroxymethylbilane pre-uroporphyrinogen in several discrete steps. This chain is Porphobilinogen deaminase, found in Corynebacterium glutamicum (strain R).